Here is a 116-residue protein sequence, read N- to C-terminus: Large ribosomal subunit protein bL17 (116 aa).

This sequence belongs to the bacterial ribosomal protein bL17 family. In terms of assembly, part of the 50S ribosomal subunit. Contacts protein L32.

This chain is Large ribosomal subunit protein bL17, found in Gloeobacter violaceus (strain ATCC 29082 / PCC 7421).